Consider the following 107-residue polypeptide: Flagellar hook-basal body complex protein FliE (107 aa).

The protein belongs to the FliE family.

Its subcellular location is the bacterial flagellum basal body. The polypeptide is Flagellar hook-basal body complex protein FliE (Cupriavidus pinatubonensis (strain JMP 134 / LMG 1197) (Cupriavidus necator (strain JMP 134))).